The following is a 479-amino-acid chain: Ribosomal RNA small subunit methyltransferase F (479 aa).

S-adenosyl-L-methionine is bound by residues 125–131 (AAAPGSK), Glu-149, Gly-177, and Asp-194. The active-site Nucleophile is the Cys-247.

Belongs to the class I-like SAM-binding methyltransferase superfamily. RsmB/NOP family.

Its subcellular location is the cytoplasm. The enzyme catalyses cytidine(1407) in 16S rRNA + S-adenosyl-L-methionine = 5-methylcytidine(1407) in 16S rRNA + S-adenosyl-L-homocysteine + H(+). Its function is as follows. Specifically methylates the cytosine at position 1407 (m5C1407) of 16S rRNA. The sequence is that of Ribosomal RNA small subunit methyltransferase F from Shigella flexneri serotype 5b (strain 8401).